Consider the following 408-residue polypeptide: Dihydrolipoyllysine-residue acetyltransferase component of pyruvate dehydrogenase complex (408 aa).

The region spanning 2-78 (PIKILMPALS…PVNSLIAVLS (77 aa)) is the Lipoyl-binding domain. N6-lipoyllysine is present on K43. The Peripheral subunit-binding (PSBD) domain occupies 128 to 165 (FASPLAKRLAKIGDIRLENVQGSGPHGRIVKQDILSYD). H381 is an active-site residue.

The protein belongs to the 2-oxoacid dehydrogenase family. As to quaternary structure, forms a 24-polypeptide structural core with octahedral symmetry. The cofactor is (R)-lipoate.

It catalyses the reaction N(6)-[(R)-dihydrolipoyl]-L-lysyl-[protein] + acetyl-CoA = N(6)-[(R)-S(8)-acetyldihydrolipoyl]-L-lysyl-[protein] + CoA. Its function is as follows. The pyruvate dehydrogenase complex catalyzes the overall conversion of pyruvate to acetyl-CoA and CO(2). It contains multiple copies of three enzymatic components: pyruvate dehydrogenase (E1), dihydrolipoamide acetyltransferase (E2) and lipoamide dehydrogenase (E3). The protein is Dihydrolipoyllysine-residue acetyltransferase component of pyruvate dehydrogenase complex (pdhC) of Rickettsia prowazekii (strain Madrid E).